The primary structure comprises 444 residues: Alanyl-tRNA editing protein Aarsd1 (444 aa).

His-109 and His-113 together coordinate Zn(2+). Ser-174 is modified (phosphoserine). Residues Cys-209 and His-213 each contribute to the Zn(2+) site.

The protein belongs to the class-II aminoacyl-tRNA synthetase family. Alax-L subfamily. It depends on Zn(2+) as a cofactor.

It is found in the cytoplasm. Its function is as follows. Functions in trans to edit the amino acid moiety from incorrectly charged tRNA(Ala). This is Alanyl-tRNA editing protein Aarsd1 (AARSD1) from Bos taurus (Bovine).